The sequence spans 417 residues: 3-isopropylmalate dehydratase large subunit (417 aa).

Residues cysteine 298, cysteine 358, and cysteine 361 each coordinate [4Fe-4S] cluster.

The protein belongs to the aconitase/IPM isomerase family. LeuC type 2 subfamily. As to quaternary structure, heterodimer of LeuC and LeuD. It depends on [4Fe-4S] cluster as a cofactor.

The enzyme catalyses (2R,3S)-3-isopropylmalate = (2S)-2-isopropylmalate. Its pathway is amino-acid biosynthesis; L-leucine biosynthesis; L-leucine from 3-methyl-2-oxobutanoate: step 2/4. Its function is as follows. Catalyzes the isomerization between 2-isopropylmalate and 3-isopropylmalate, via the formation of 2-isopropylmaleate. The sequence is that of 3-isopropylmalate dehydratase large subunit from Thermoanaerobacter pseudethanolicus (strain ATCC 33223 / 39E) (Clostridium thermohydrosulfuricum).